Here is a 63-residue protein sequence, read N- to C-terminus: Probable rubredoxin (63 aa).

The 52-residue stretch at 11–62 (MKRYKCRVCGYIYDPEKGEPRTDTPPGTPFEDLPETWRCPSCGAKKKMFKPL) folds into the Rubredoxin-like domain. Fe cation contacts are provided by Cys-16, Cys-19, Cys-49, and Cys-52.

The protein belongs to the rubredoxin family. Fe(3+) serves as cofactor.

Rubredoxin is a small nonheme, iron protein lacking acid-labile sulfide. Its single Fe, chelated to 4 Cys, functions as an electron acceptor and may also stabilize the conformation of the molecule. The chain is Probable rubredoxin from Methanothermobacter thermautotrophicus (strain ATCC 29096 / DSM 1053 / JCM 10044 / NBRC 100330 / Delta H) (Methanobacterium thermoautotrophicum).